The primary structure comprises 64 residues: UPF0434 protein TERTU_2813 (64 aa).

This sequence belongs to the UPF0434 family.

The protein is UPF0434 protein TERTU_2813 of Teredinibacter turnerae (strain ATCC 39867 / T7901).